Here is a 181-residue protein sequence, read N- to C-terminus: Large ribosomal subunit protein uL5 (181 aa).

It belongs to the universal ribosomal protein uL5 family. As to quaternary structure, part of the 50S ribosomal subunit; part of the 5S rRNA/L5/L18/L25 subcomplex. Contacts the 5S rRNA and the P site tRNA. Forms a bridge to the 30S subunit in the 70S ribosome.

This is one of the proteins that bind and probably mediate the attachment of the 5S RNA into the large ribosomal subunit, where it forms part of the central protuberance. In the 70S ribosome it contacts protein S13 of the 30S subunit (bridge B1b), connecting the 2 subunits; this bridge is implicated in subunit movement. Contacts the P site tRNA; the 5S rRNA and some of its associated proteins might help stabilize positioning of ribosome-bound tRNAs. This is Large ribosomal subunit protein uL5 from Campylobacter jejuni subsp. doylei (strain ATCC BAA-1458 / RM4099 / 269.97).